The primary structure comprises 85 residues: UPF0297 protein CLL_A1175 (85 aa).

The protein belongs to the UPF0297 family.

The protein is UPF0297 protein CLL_A1175 of Clostridium botulinum (strain Eklund 17B / Type B).